The primary structure comprises 79 residues: MSTTIWILLIIVALFGGLVGGIFIARKQIEKEIGEHPRLTPDAIREMMSQMGQKPSEAKVQQTYRNIVKHAKTAIKTKK.

The chain crosses the membrane as a helical span at residues 5-25 (IWILLIIVALFGGLVGGIFIA).

This sequence belongs to the UPF0154 family.

It localises to the cell membrane. This chain is UPF0154 protein SAK_1616, found in Streptococcus agalactiae serotype Ia (strain ATCC 27591 / A909 / CDC SS700).